Here is a 288-residue protein sequence, read N- to C-terminus: Putative N-terminal acetyltransferase 2 (288 aa).

The disordered stretch occupies residues 68-90 (TEEKSSQFDENKSKSNNGKKNEP).

As to quaternary structure, heterooligomeric.

It is found in the cytoplasm. Maybe involved in N-terminal acetylation of proteins. N-acetylation plays a role in normal eukaryotic translation and processing, protect against proteolytic degradation and protein turnover. This chain is Putative N-terminal acetyltransferase 2 (NAT2), found in Saccharomyces cerevisiae (strain ATCC 204508 / S288c) (Baker's yeast).